The primary structure comprises 173 residues: MNRQEKAQIIEQLKEKAERASIAIVTDFKGLGVEEFTQLRANLRNVGVDCQVVKNTLARLAFTGTDHEVLADKFKENCAIVIGYDDPVAAAKAVADFAKESKTFDMRFASLEGKYLDEDGVKALSKLPSKEELLGKALGTMNAVPTNFVSLLANVPRGFLNVLTALKDQKEAA.

This sequence belongs to the universal ribosomal protein uL10 family. Part of the ribosomal stalk of the 50S ribosomal subunit. The N-terminus interacts with L11 and the large rRNA to form the base of the stalk. The C-terminus forms an elongated spine to which L12 dimers bind in a sequential fashion forming a multimeric L10(L12)X complex.

Forms part of the ribosomal stalk, playing a central role in the interaction of the ribosome with GTP-bound translation factors. The chain is Large ribosomal subunit protein uL10 from Maridesulfovibrio salexigens (strain ATCC 14822 / DSM 2638 / NCIMB 8403 / VKM B-1763) (Desulfovibrio salexigens).